The sequence spans 190 residues: UPF0301 protein PSPPH_0476 (190 aa).

The protein belongs to the UPF0301 (AlgH) family.

The polypeptide is UPF0301 protein PSPPH_0476 (Pseudomonas savastanoi pv. phaseolicola (strain 1448A / Race 6) (Pseudomonas syringae pv. phaseolicola (strain 1448A / Race 6))).